We begin with the raw amino-acid sequence, 172 residues long: Peptidyl-prolyl cis-trans isomerase (172 aa).

A PPIase cyclophilin-type domain is found at 7 to 170 (FFDMAIAGNP…RPVTIADCGQ (164 aa)).

Belongs to the cyclophilin-type PPIase family. In terms of tissue distribution, expressed in meristematic tissues, with higher levels in nodules.

It localises to the cytoplasm. It carries out the reaction [protein]-peptidylproline (omega=180) = [protein]-peptidylproline (omega=0). Its activity is regulated as follows. Binds cyclosporin A (CsA). CsA mediates some of its effects via an inhibitory action on PPIase. PPIases accelerate the folding of proteins. It catalyzes the cis-trans isomerization of proline imidic peptide bonds in oligopeptides. The chain is Peptidyl-prolyl cis-trans isomerase from Lupinus luteus (European yellow lupine).